We begin with the raw amino-acid sequence, 440 residues long: RUN domain-containing protein 3A (440 aa).

The RUN domain occupies 52–184 (DDSSEEFVNF…IDFSFCLKGE (133 aa)). Residues 213 to 233 (DDRESVGGSSSEDSSPEHPYL) are disordered. Residues 262–317 (YLEELVRLRETQLKNLEAENKRLTQRISEQAEQSLQEKHQLEGVILELQEQLTGLL) adopt a coiled-coil conformation. The interval 374–402 (LSSESQRLDGKQDGEPWGPIGKDPTPSML) is disordered.

It belongs to the RUNDC3 family.

In Xenopus tropicalis (Western clawed frog), this protein is RUN domain-containing protein 3A (rundc3a).